Consider the following 285-residue polypeptide: Nucleotide-binding protein NTHI1314 (285 aa).

8-15 (GRSGAGKS) contributes to the ATP binding site. 56–59 (DIRN) is a binding site for GTP.

Belongs to the RapZ-like family.

Displays ATPase and GTPase activities. The chain is Nucleotide-binding protein NTHI1314 from Haemophilus influenzae (strain 86-028NP).